The chain runs to 51 residues: Glutamate dehydrogenase (51 aa).

Lysine 31 provides a ligand contact to substrate.

The protein belongs to the Glu/Leu/Phe/Val dehydrogenases family. Homohexamer.

The protein localises to the mitochondrion matrix. It carries out the reaction L-glutamate + NAD(+) + H2O = 2-oxoglutarate + NH4(+) + NADH + H(+). It catalyses the reaction L-glutamate + NADP(+) + H2O = 2-oxoglutarate + NH4(+) + NADPH + H(+). In terms of biological role, mitochondrial glutamate dehydrogenase that converts L-glutamate into alpha-ketoglutarate. Plays a key role in glutamine anaplerosis by producing alpha-ketoglutarate, an important intermediate in the tricarboxylic acid cycle. This Electrophorus electricus (Electric eel) protein is Glutamate dehydrogenase.